Reading from the N-terminus, the 468-residue chain is UDP-N-acetylmuramate--L-alanine ligase (468 aa).

107–113 contacts ATP; the sequence is GTHGKTT.

The protein belongs to the MurCDEF family.

It is found in the cytoplasm. The catalysed reaction is UDP-N-acetyl-alpha-D-muramate + L-alanine + ATP = UDP-N-acetyl-alpha-D-muramoyl-L-alanine + ADP + phosphate + H(+). The protein operates within cell wall biogenesis; peptidoglycan biosynthesis. Its function is as follows. Cell wall formation. This chain is UDP-N-acetylmuramate--L-alanine ligase, found in Roseiflexus sp. (strain RS-1).